The sequence spans 145 residues: uncharacterized protein (145 aa).

An N-terminal signal peptide occupies residues 1–22 (MLTRLVLSAHLSSTTSPPWTHA). The N-linked (GlcNAc...) asparagine glycan is linked to asparagine 98. Positions 103-145 (SSGQQRQAARQEEENSICKAHDSREGRLGYPLSAHQPGSGGPN) are disordered.

The protein resides in the secreted. This is an uncharacterized protein from Homo sapiens (Human).